The chain runs to 331 residues: 6-phosphogluconolactonase (331 aa).

The protein belongs to the cycloisomerase 2 family.

It catalyses the reaction 6-phospho-D-glucono-1,5-lactone + H2O = 6-phospho-D-gluconate + H(+). It participates in carbohydrate degradation; pentose phosphate pathway; D-ribulose 5-phosphate from D-glucose 6-phosphate (oxidative stage): step 2/3. In terms of biological role, catalyzes the hydrolysis of 6-phosphogluconolactone to 6-phosphogluconate. This Citrobacter koseri (strain ATCC BAA-895 / CDC 4225-83 / SGSC4696) protein is 6-phosphogluconolactonase.